The chain runs to 115 residues: NADH-ubiquinone oxidoreductase chain 3 (115 aa).

3 helical membrane-spanning segments follow: residues 3-23 (LALA…ITFW), 55-75 (FFLV…LLPL), and 86-106 (LTIA…AYEW).

The protein belongs to the complex I subunit 3 family. As to quaternary structure, core subunit of respiratory chain NADH dehydrogenase (Complex I) which is composed of 45 different subunits. Interacts with TMEM186. Interacts with TMEM242.

It localises to the mitochondrion inner membrane. The catalysed reaction is a ubiquinone + NADH + 5 H(+)(in) = a ubiquinol + NAD(+) + 4 H(+)(out). Functionally, core subunit of the mitochondrial membrane respiratory chain NADH dehydrogenase (Complex I) which catalyzes electron transfer from NADH through the respiratory chain, using ubiquinone as an electron acceptor. Essential for the catalytic activity of complex I. The chain is NADH-ubiquinone oxidoreductase chain 3 from Hylobates lar (Lar gibbon).